We begin with the raw amino-acid sequence, 129 residues long: Small ribosomal subunit protein uS11 (129 aa).

The protein belongs to the universal ribosomal protein uS11 family. Part of the 30S ribosomal subunit. Interacts with proteins S7 and S18. Binds to IF-3.

Located on the platform of the 30S subunit, it bridges several disparate RNA helices of the 16S rRNA. Forms part of the Shine-Dalgarno cleft in the 70S ribosome. The sequence is that of Small ribosomal subunit protein uS11 from Photobacterium profundum (strain SS9).